Reading from the N-terminus, the 345-residue chain is UDP-N-acetylenolpyruvoylglucosamine reductase (345 aa).

One can recognise an FAD-binding PCMH-type domain in the interval 27–197 (FDASAELAYE…TKVVFKLPKQ (171 aa)). Arginine 174 is an active-site residue. Catalysis depends on serine 245, which acts as the Proton donor. Glutamate 341 is an active-site residue.

This sequence belongs to the MurB family. It depends on FAD as a cofactor.

The protein localises to the cytoplasm. The enzyme catalyses UDP-N-acetyl-alpha-D-muramate + NADP(+) = UDP-N-acetyl-3-O-(1-carboxyvinyl)-alpha-D-glucosamine + NADPH + H(+). It functions in the pathway cell wall biogenesis; peptidoglycan biosynthesis. In terms of biological role, cell wall formation. This is UDP-N-acetylenolpyruvoylglucosamine reductase from Polynucleobacter asymbioticus (strain DSM 18221 / CIP 109841 / QLW-P1DMWA-1) (Polynucleobacter necessarius subsp. asymbioticus).